The primary structure comprises 599 residues: Elongation factor 4 (599 aa).

A tr-type G domain is found at 2-184; it reads KHIRNFSIIA…RLVRDIPPPE (183 aa). GTP is bound by residues 14–19 and 131–134; these read DHGKST and NKID.

The protein belongs to the TRAFAC class translation factor GTPase superfamily. Classic translation factor GTPase family. LepA subfamily.

Its subcellular location is the cell inner membrane. It catalyses the reaction GTP + H2O = GDP + phosphate + H(+). Functionally, required for accurate and efficient protein synthesis under certain stress conditions. May act as a fidelity factor of the translation reaction, by catalyzing a one-codon backward translocation of tRNAs on improperly translocated ribosomes. Back-translocation proceeds from a post-translocation (POST) complex to a pre-translocation (PRE) complex, thus giving elongation factor G a second chance to translocate the tRNAs correctly. Binds to ribosomes in a GTP-dependent manner. The polypeptide is Elongation factor 4 (Erwinia tasmaniensis (strain DSM 17950 / CFBP 7177 / CIP 109463 / NCPPB 4357 / Et1/99)).